The following is an 88-amino-acid chain: Small ribosomal subunit protein uS15 (88 aa).

It belongs to the universal ribosomal protein uS15 family. In terms of assembly, part of the 30S ribosomal subunit. Forms a bridge to the 50S subunit in the 70S ribosome, contacting the 23S rRNA.

One of the primary rRNA binding proteins, it binds directly to 16S rRNA where it helps nucleate assembly of the platform of the 30S subunit by binding and bridging several RNA helices of the 16S rRNA. Functionally, forms an intersubunit bridge (bridge B4) with the 23S rRNA of the 50S subunit in the ribosome. This Psychrobacter cryohalolentis (strain ATCC BAA-1226 / DSM 17306 / VKM B-2378 / K5) protein is Small ribosomal subunit protein uS15.